The primary structure comprises 191 residues: Fe/S biogenesis protein NfuA (191 aa).

Residues cysteine 149 and cysteine 152 each coordinate [4Fe-4S] cluster.

The protein belongs to the NfuA family. Homodimer. [4Fe-4S] cluster is required as a cofactor.

In terms of biological role, involved in iron-sulfur cluster biogenesis. Binds a 4Fe-4S cluster, can transfer this cluster to apoproteins, and thereby intervenes in the maturation of Fe/S proteins. Could also act as a scaffold/chaperone for damaged Fe/S proteins. In Salmonella choleraesuis (strain SC-B67), this protein is Fe/S biogenesis protein NfuA.